Consider the following 248-residue polypeptide: MSSSTQVGLKEQLHPLIRDLATGIEATWQRWLNLEPYAAMPADLGYIEGKLEGERLQIENRCYQSREFRKLHLELARVGNNLDILHCVLFPRTTFDLPMFGADLVGGRGQISAAIVDLSPTTIARELSNDYIAGLTALPNPTFQGLRELPTWGDIFSSFCLFIRPGSPEEEAAFLDRALGFLQVHCQQAAAATALTDPEAIATVLEQQRYYCEQQRRNDKTRRVLEKAFGDDWADRYMTTMLFDLPSD.

This sequence belongs to the HY2 family.

The catalysed reaction is (2R,3Z)-phycocyanobilin + 4 oxidized [2Fe-2S]-[ferredoxin] = biliverdin IXalpha + 4 reduced [2Fe-2S]-[ferredoxin] + 4 H(+). In terms of biological role, catalyzes the four-electron reduction of biliverdin IX-alpha (2-electron reduction at both the A and D rings); the reaction proceeds via an isolatable 2-electron intermediate, 181,182-dihydrobiliverdin. The chain is Phycocyanobilin:ferredoxin oxidoreductase (pcyA) from Synechococcus elongatus (strain ATCC 33912 / PCC 7942 / FACHB-805) (Anacystis nidulans R2).